We begin with the raw amino-acid sequence, 518 residues long: Cyclin-L2 (518 aa).

2 cyclin-like regions span residues 81–183 and 196–280; these read ELIQ…RVLK and KIIV…KILQ. The interval 310–518 is disordered; that stretch reads AKGLLPGTAP…DHPGHSRHRR (209 aa). 5 positions are modified to phosphoserine: serine 328, serine 335, serine 345, serine 348, and serine 366. The tract at residues 382 to 420 is RS; it reads RSREQSYSRSPSRSASPKRRKSDSGSTSGGSKSQSRSRS. Over residues 405–427 the composition is skewed to low complexity; sequence SGSTSGGSKSQSRSRSRSDSPPR. A compositionally biased stretch (basic and acidic residues) spans 438–450; that stretch reads SEVRGSRKSKDCK. The segment covering 455–469 has biased composition (basic residues); the sequence is KPHKSRSRSSSRSRS. Basic and acidic residues-rich tracts occupy residues 470 to 479 and 487 to 512; these read RSRERTDNSG and YYRD…DHPG.

This sequence belongs to the cyclin family. Cyclin L subfamily. In terms of assembly, interacts with CDK11A, CDK11B, CDK12, CDK13 and POLR2A, the hyperphosphorylated C-terminal domain (CTD) of RNA polymerase II. May form a ternary complex with CDK11B and casein kinase II (CKII). Interacts with pre-mRNA-splicing factors, including at least SRSF1, SRSF2 and SRSF7/SLU7. As to expression, widely expressed (at protein level).

Its subcellular location is the nucleus speckle. The protein resides in the nucleus. It localises to the nucleoplasm. In terms of biological role, involved in pre-mRNA splicing. May induce cell death, possibly by acting on the transcription and RNA processing of apoptosis-related factors. The chain is Cyclin-L2 (Ccnl2) from Mus musculus (Mouse).